A 325-amino-acid polypeptide reads, in one-letter code: Large ribosomal subunit protein uL4m (325 aa).

Residues 113–158 (ASTKTRYEVHGSHKKMSPQKGTGNARRGTRQSPLMKGGGKTFGPKP) form a disordered region.

The protein belongs to the universal ribosomal protein uL4 family. In terms of assembly, component of the mitochondrial large ribosomal subunit (mt-LSU). Mature N.crassa 74S mitochondrial ribosomes consist of a small (37S) and a large (54S) subunit. The 37S small subunit contains a 16S ribosomal RNA (16S mt-rRNA) and 32 different proteins. The 54S large subunit contains a 23S rRNA (23S mt-rRNA) and 42 different proteins.

The protein resides in the mitochondrion. In terms of biological role, component of the mitochondrial ribosome (mitoribosome), a dedicated translation machinery responsible for the synthesis of mitochondrial genome-encoded proteins, including at least some of the essential transmembrane subunits of the mitochondrial respiratory chain. The mitoribosomes are attached to the mitochondrial inner membrane and translation products are cotranslationally integrated into the membrane. In Neurospora crassa (strain ATCC 24698 / 74-OR23-1A / CBS 708.71 / DSM 1257 / FGSC 987), this protein is Large ribosomal subunit protein uL4m (yml6).